A 620-amino-acid polypeptide reads, in one-letter code: DNA mismatch repair protein MutL (620 aa).

It belongs to the DNA mismatch repair MutL/HexB family.

This protein is involved in the repair of mismatches in DNA. It is required for dam-dependent methyl-directed DNA mismatch repair. May act as a 'molecular matchmaker', a protein that promotes the formation of a stable complex between two or more DNA-binding proteins in an ATP-dependent manner without itself being part of a final effector complex. In Clostridium tetani (strain Massachusetts / E88), this protein is DNA mismatch repair protein MutL.